The chain runs to 281 residues: Undecaprenyl-diphosphatase (281 aa).

Helical transmembrane passes span 45-65 (AFTN…VVVI), 86-106 (WQLW…GLIF), 114-134 (FQNF…FIYV), 148-168 (LVSL…LSLI), 196-216 (FFLG…KFIV), 224-244 (SQLF…LYVI), and 256-276 (FTFF…YGLM).

Belongs to the UppP family.

The protein localises to the cell membrane. It carries out the reaction di-trans,octa-cis-undecaprenyl diphosphate + H2O = di-trans,octa-cis-undecaprenyl phosphate + phosphate + H(+). Catalyzes the dephosphorylation of undecaprenyl diphosphate (UPP). Confers resistance to bacitracin. This Streptococcus mutans serotype c (strain ATCC 700610 / UA159) protein is Undecaprenyl-diphosphatase.